The primary structure comprises 308 residues: Prephenate dehydratase (308 aa).

Positions 3 to 187 (RITYLGPEGT…AHTRFVLVGR (185 aa)) constitute a Prephenate dehydratase domain. Residues 201–278 (SVVLGLGNVP…EDVRYLGSWP (78 aa)) enclose the ACT domain.

Homodimer.

It catalyses the reaction prephenate + H(+) = 3-phenylpyruvate + CO2 + H2O. The protein operates within amino-acid biosynthesis; L-phenylalanine biosynthesis; phenylpyruvate from prephenate: step 1/1. The sequence is that of Prephenate dehydratase (pheA) from Mycobacteroides abscessus (strain ATCC 19977 / DSM 44196 / CCUG 20993 / CIP 104536 / JCM 13569 / NCTC 13031 / TMC 1543 / L948) (Mycobacterium abscessus).